A 430-amino-acid chain; its full sequence is Cell wall protein ECM33 (430 aa).

Positions 1-19 (MQFKNALTATAILSASALA) are cleaved as a signal peptide. Residues N22, N57, N83, N197, N210, N228, N235, N242, N268, N280, N305, and N329 are each glycosylated (N-linked (GlcNAc...) asparagine). Position 340 is a phosphoserine (S340). Low complexity predominate over residues 362 to 402 (LSSTSTESSKSSATSSASSSGDASNAQASVSASASSSSSSS). The interval 362 to 411 (LSSTSTESSKSSATSSASSSGDASNAQASVSASASSSSSSSKKSKGAAPE) is disordered. G407 carries the GPI-anchor amidated glycine lipid modification. The propeptide at 408 to 430 (AAPELVPATSFMGVVAAVAVALL) is removed in mature form.

It belongs to the SPS2 family. In terms of processing, the GPI-anchor is attached to the protein in the endoplasmic reticulum and serves to target the protein to the cell surface. There, the glucosamine-inositol phospholipid moiety is cleaved off and the GPI-modified mannoprotein is covalently attached via its lipidless GPI glycan remnant to the 1,6-beta-glucan of the outer cell wall layer.

Its subcellular location is the cell membrane. It is found in the secreted. The protein localises to the cell wall. Its function is as follows. Required for proper cell wall integrity and for the correct assembly of the mannoprotein outer layer of the cell wall. Important for apical bud growth. The sequence is that of Cell wall protein ECM33 (ECM33) from Saccharomyces cerevisiae (strain JAY291) (Baker's yeast).